Reading from the N-terminus, the 478-residue chain is Protein nucleotidyltransferase YdiU (478 aa).

ATP is bound by residues Gly-84, Gly-86, Arg-87, Lys-107, Asp-119, Gly-120, Arg-170, and Arg-177. Asp-246 acts as the Proton acceptor in catalysis. The Mg(2+) site is built by Asn-247 and Asp-256. An ATP-binding site is contributed by Asp-256.

This sequence belongs to the SELO family. Mg(2+) serves as cofactor. The cofactor is Mn(2+).

The enzyme catalyses L-seryl-[protein] + ATP = 3-O-(5'-adenylyl)-L-seryl-[protein] + diphosphate. It carries out the reaction L-threonyl-[protein] + ATP = 3-O-(5'-adenylyl)-L-threonyl-[protein] + diphosphate. It catalyses the reaction L-tyrosyl-[protein] + ATP = O-(5'-adenylyl)-L-tyrosyl-[protein] + diphosphate. The catalysed reaction is L-histidyl-[protein] + UTP = N(tele)-(5'-uridylyl)-L-histidyl-[protein] + diphosphate. The enzyme catalyses L-seryl-[protein] + UTP = O-(5'-uridylyl)-L-seryl-[protein] + diphosphate. It carries out the reaction L-tyrosyl-[protein] + UTP = O-(5'-uridylyl)-L-tyrosyl-[protein] + diphosphate. Functionally, nucleotidyltransferase involved in the post-translational modification of proteins. It can catalyze the addition of adenosine monophosphate (AMP) or uridine monophosphate (UMP) to a protein, resulting in modifications known as AMPylation and UMPylation. The protein is Protein nucleotidyltransferase YdiU of Escherichia coli O127:H6 (strain E2348/69 / EPEC).